The following is a 387-amino-acid chain: Lymphocyte transmembrane adapter 1 (387 aa).

Residues 1-37 (MDVTTSAWSETTRRISEPSTLQGTLGSLDKAEDHSSS) lie on the Extracellular side of the membrane. The helical; Signal-anchor for type III membrane protein transmembrane segment at 38–58 (IFSGFAALLAILLVVAVICVL) threads the bilayer. At 59-387 (WCCGKRKKRQ…VCAAEAGARG (329 aa)) the chain is on the cytoplasmic side. The disordered stretch occupies residues 114-136 (VSTESLLSRNSDSPSSEHVPSRA). Positions 118–129 (SLLSRNSDSPSS) are enriched in low complexity. Tyr195 carries the phosphotyrosine modification. The segment at 230–268 (SEEIDEGCGNASDCTSLGSPGTENSDPLSDGEGSSQTSN) is disordered. A compositionally biased stretch (polar residues) spans 241 to 268 (SDCTSLGSPGTENSDPLSDGEGSSQTSN). Tyr270 and Tyr296 each carry phosphotyrosine. Positions 294–387 (RDYENVPPGP…VCAAEAGARG (94 aa)) are disordered. Basic and acidic residues predominate over residues 319 to 329 (DHVEGRTDGPE). Positions 360–369 (PWEDAEETSS) are enriched in acidic residues. Phosphotyrosine is present on Tyr375.

In terms of assembly, when phosphorylated, interacts with GRB2, PIK3R1 and GRAP2. In terms of processing, phosphorylated on tyrosines upon TCR or BCR activation; which leads to the recruitment of GRB2, PIK3R1 and GRAP2.

It localises to the cell membrane. In terms of biological role, negatively regulates TCR (T-cell antigen receptor)-mediated signaling in T-cells and BCR (B-cell antigen receptor)-mediated signaling in B-cells. This Bos taurus (Bovine) protein is Lymphocyte transmembrane adapter 1 (LAX1).